A 432-amino-acid chain; its full sequence is Adenylosuccinate synthetase (432 aa).

Residues 13-19 and 41-43 each bind GTP; these read GDEGKGK and GHT. The active-site Proton acceptor is the D14. Mg(2+) is bound by residues D14 and G41. Residues 14 to 17, 39 to 42, T131, R145, Q226, T241, and R305 contribute to the IMP site; these read DEGK and NAGH. H42 acts as the Proton donor in catalysis. 301–307 contributes to the substrate binding site; the sequence is SVTGRAR. GTP contacts are provided by residues R307, 333-335, and 416-418; these read KLD and STG.

It belongs to the adenylosuccinate synthetase family. In terms of assembly, homodimer. Mg(2+) is required as a cofactor.

The protein localises to the cytoplasm. It catalyses the reaction IMP + L-aspartate + GTP = N(6)-(1,2-dicarboxyethyl)-AMP + GDP + phosphate + 2 H(+). It functions in the pathway purine metabolism; AMP biosynthesis via de novo pathway; AMP from IMP: step 1/2. Plays an important role in the de novo pathway of purine nucleotide biosynthesis. Catalyzes the first committed step in the biosynthesis of AMP from IMP. In Neisseria meningitidis serogroup C (strain 053442), this protein is Adenylosuccinate synthetase.